Here is a 250-residue protein sequence, read N- to C-terminus: Glutamate racemase (250 aa).

Substrate-binding positions include 7-8 (DS) and 39-40 (YG). Cys70 functions as the Proton donor/acceptor in the catalytic mechanism. A substrate-binding site is contributed by 71-72 (NT). Residue Cys180 is the Proton donor/acceptor of the active site. 181–182 (TH) is a substrate binding site.

This sequence belongs to the aspartate/glutamate racemases family.

The enzyme catalyses L-glutamate = D-glutamate. It participates in cell wall biogenesis; peptidoglycan biosynthesis. Functionally, provides the (R)-glutamate required for cell wall biosynthesis. The protein is Glutamate racemase of Campylobacter jejuni subsp. jejuni serotype O:2 (strain ATCC 700819 / NCTC 11168).